A 162-amino-acid chain; its full sequence is Shikimate kinase (162 aa).

ATP is bound at residue 10 to 15; that stretch reads GAGKST. Mg(2+) is bound at residue Ser-14. Substrate-binding residues include Asp-28, Arg-52, and Gly-73. Arg-113 is an ATP binding site. Arg-129 is a substrate binding site.

Belongs to the shikimate kinase family. In terms of assembly, monomer. Requires Mg(2+) as cofactor.

The protein localises to the cytoplasm. The catalysed reaction is shikimate + ATP = 3-phosphoshikimate + ADP + H(+). The protein operates within metabolic intermediate biosynthesis; chorismate biosynthesis; chorismate from D-erythrose 4-phosphate and phosphoenolpyruvate: step 5/7. Functionally, catalyzes the specific phosphorylation of the 3-hydroxyl group of shikimic acid using ATP as a cosubstrate. This chain is Shikimate kinase, found in Lactococcus lactis subsp. lactis (strain IL1403) (Streptococcus lactis).